We begin with the raw amino-acid sequence, 311 residues long: Putative mitochondrial transporter UCP3 (311 aa).

The Mitochondrial intermembrane segment spans residues methionine 1–proline 10. Residues proline 11–phenylalanine 32 form a helical membrane-spanning segment. Solcar repeat units lie at residues proline 11 to phenylalanine 105, serine 114 to lysine 205, and aspartate 214 to alanine 299. Residues proline 33–serine 76 lie on the Mitochondrial matrix side of the membrane. The chain crosses the membrane as a helical span at residues proline 77–tyrosine 99. At aspartate 100–arginine 119 the chain is on the mitochondrial intermembrane side. The helical transmembrane segment at isoleucine 120 to proline 136 threads the bilayer. The Mitochondrial matrix segment spans residues threonine 137 to leucine 182. Residues proline 183 to tyrosine 199 traverse the membrane as a helical segment. The Mitochondrial intermembrane portion of the chain corresponds to aspartate 200–phenylalanine 216. Residues proline 217–proline 236 form a helical membrane-spanning segment. Topologically, residues valine 237–alanine 270 are mitochondrial matrix. Residues phenylalanine 271–tyrosine 293 form a helical membrane-spanning segment. The interval serine 278–leucine 300 is purine nucleotide binding. Over glutamate 294–phenylalanine 311 the chain is Mitochondrial intermembrane.

The protein belongs to the mitochondrial carrier (TC 2.A.29) family. As to quaternary structure, interacts with HAX1; the interaction is direct and calcium-dependent.

The protein resides in the mitochondrion inner membrane. In terms of biological role, putative transmembrane transporter that plays a role in mitochondrial metabolism via an as yet unclear mechanism. Originally, this mitochondrial protein was thought to act as a proton transmembrane transporter from the mitochondrial intermembrane space into the matrix, causing proton leaks through the inner mitochondrial membrane, thereby uncoupling mitochondrial membrane potential generation from ATP synthesis. However, this function is controversial and uncoupling may not be the function, or at least not the main function, but rather a consequence of more conventional metabolite transporter activity. This is Putative mitochondrial transporter UCP3 from Canis lupus familiaris (Dog).